A 571-amino-acid polypeptide reads, in one-letter code: Sulfite reductase [NADPH] hemoprotein beta-component (571 aa).

4 residues coordinate [4Fe-4S] cluster: Cys-435, Cys-441, Cys-480, and Cys-484. Cys-484 contacts siroheme.

This sequence belongs to the nitrite and sulfite reductase 4Fe-4S domain family. In terms of assembly, alpha(8)-beta(8). The alpha component is a flavoprotein, the beta component is a hemoprotein. It depends on siroheme as a cofactor. The cofactor is [4Fe-4S] cluster.

It catalyses the reaction hydrogen sulfide + 3 NADP(+) + 3 H2O = sulfite + 3 NADPH + 4 H(+). It participates in sulfur metabolism; hydrogen sulfide biosynthesis; hydrogen sulfide from sulfite (NADPH route): step 1/1. Its function is as follows. Component of the sulfite reductase complex that catalyzes the 6-electron reduction of sulfite to sulfide. This is one of several activities required for the biosynthesis of L-cysteine from sulfate. The polypeptide is Sulfite reductase [NADPH] hemoprotein beta-component (Erwinia tasmaniensis (strain DSM 17950 / CFBP 7177 / CIP 109463 / NCPPB 4357 / Et1/99)).